The primary structure comprises 291 residues: 2-C-methyl-D-erythritol 4-phosphate cytidylyltransferase (291 aa).

Residues 1–23 are disordered; that stretch reads MTERDFDTPVETPTVQPAPAQGA.

The protein belongs to the IspD/TarI cytidylyltransferase family. IspD subfamily.

The enzyme catalyses 2-C-methyl-D-erythritol 4-phosphate + CTP + H(+) = 4-CDP-2-C-methyl-D-erythritol + diphosphate. It participates in isoprenoid biosynthesis; isopentenyl diphosphate biosynthesis via DXP pathway; isopentenyl diphosphate from 1-deoxy-D-xylulose 5-phosphate: step 2/6. Functionally, catalyzes the formation of 4-diphosphocytidyl-2-C-methyl-D-erythritol from CTP and 2-C-methyl-D-erythritol 4-phosphate (MEP). This is 2-C-methyl-D-erythritol 4-phosphate cytidylyltransferase from Bifidobacterium longum (strain NCC 2705).